A 907-amino-acid polypeptide reads, in one-letter code: Schlafen family member 13 (907 aa).

The n'-domain region stretch occupies residues 1-353 (MEIHPSLVVE…WVRMMVDIGP (353 aa)). Active-site residues include Glu-205 and Glu-210. Zn(2+) contacts are provided by His-281, Cys-283, and Cys-318. ATP is bound at residue 604-611 (GMPGSGKT).

It belongs to the Schlafen family. Subgroup III subfamily. It depends on Mg(2+) as a cofactor.

Its subcellular location is the cytoplasm. In terms of biological role, endoribonuclease that cleaves tRNAs and rRNAs. Cleaves tRNAs 11 nucleotides from the 3'-terminus at the acceptor stem. Does not act on tRNA(Sec). The protein is Schlafen family member 13 of Rattus norvegicus (Rat).